The following is a 111-amino-acid chain: Large ribosomal subunit protein uL22 (111 aa).

This sequence belongs to the universal ribosomal protein uL22 family. Part of the 50S ribosomal subunit.

Its function is as follows. This protein binds specifically to 23S rRNA; its binding is stimulated by other ribosomal proteins, e.g. L4, L17, and L20. It is important during the early stages of 50S assembly. It makes multiple contacts with different domains of the 23S rRNA in the assembled 50S subunit and ribosome. The globular domain of the protein is located near the polypeptide exit tunnel on the outside of the subunit, while an extended beta-hairpin is found that lines the wall of the exit tunnel in the center of the 70S ribosome. This is Large ribosomal subunit protein uL22 from Acholeplasma laidlawii (strain PG-8A).